A 118-amino-acid polypeptide reads, in one-letter code: Large ribosomal subunit protein bL20 (118 aa).

This sequence belongs to the bacterial ribosomal protein bL20 family.

Functionally, binds directly to 23S ribosomal RNA and is necessary for the in vitro assembly process of the 50S ribosomal subunit. It is not involved in the protein synthesizing functions of that subunit. This chain is Large ribosomal subunit protein bL20, found in Lactobacillus johnsonii (strain CNCM I-12250 / La1 / NCC 533).